Here is a 224-residue protein sequence, read N- to C-terminus: Lipoprotein-releasing system ATP-binding protein LolD (224 aa).

The 220-residue stretch at 5–224 (LVLDGLTKAY…VVRLEAGRVV (220 aa)) folds into the ABC transporter domain. An ATP-binding site is contributed by 42 to 49 (APSGAGKS).

It belongs to the ABC transporter superfamily. Lipoprotein translocase (TC 3.A.1.125) family. In terms of assembly, the complex is composed of two ATP-binding proteins (LolD) and two transmembrane proteins (LolC and LolE).

It localises to the cell inner membrane. Part of the ABC transporter complex LolCDE involved in the translocation of mature outer membrane-directed lipoproteins, from the inner membrane to the periplasmic chaperone, LolA. Responsible for the formation of the LolA-lipoprotein complex in an ATP-dependent manner. In Cereibacter sphaeroides (strain ATCC 17023 / DSM 158 / JCM 6121 / CCUG 31486 / LMG 2827 / NBRC 12203 / NCIMB 8253 / ATH 2.4.1.) (Rhodobacter sphaeroides), this protein is Lipoprotein-releasing system ATP-binding protein LolD.